The primary structure comprises 216 residues: Heart- and neural crest derivatives-expressed protein 2 (216 aa).

A disordered region spans residues 74-115 (MDHSHYGGVPPGSGPPGLGGPRPVKRRGTANRKERRRTQSIN). The span at 82-93 (VPPGSGPPGLGG) shows a compositional bias: gly residues. A compositionally biased stretch (basic residues) spans 96–111 (PVKRRGTANRKERRRT). Residues 98 to 150 (KRRGTANRKERRRTQSINSAFAELRECIPNVPADTKLSKIKTLRLATSYIAYL) enclose the bHLH domain.

In terms of assembly, efficient DNA binding requires dimerization with another bHLH protein.

It localises to the nucleus. Functionally, essential for cardiac morphogenesis. Binds DNA on E-box consensus sequence 5'-CANNTG-3'. Plays an important role in limb development, particularly in the establishment of anterior-posterior polarization of the limb bud. The chain is Heart- and neural crest derivatives-expressed protein 2 (HAND2) from Gallus gallus (Chicken).